Consider the following 204-residue polypeptide: MKKYRDHYFLKAKQENYPARSVYKLKEIDNRFKIFRQGMKVLDLGAAPGSWSLGAAEKVGPRGRVLACDLQETDTVFPDNVTFMQENVFERSEAFENLLDEIAPFDVVISDMAPRTTGTRFTDQARSLELCLEALAVADRCLIKGGSFVVKIFMGPDVQELVQAMRQRFSAVKSFKPKSSRAESKETFYVCLGYRGVETSDTDK.

S-adenosyl-L-methionine-binding residues include Gly-49, Trp-51, Asp-69, Asn-87, and Asp-111. Residue Lys-151 is the Proton acceptor of the active site.

It belongs to the class I-like SAM-binding methyltransferase superfamily. RNA methyltransferase RlmE family.

The protein localises to the cytoplasm. The enzyme catalyses uridine(2552) in 23S rRNA + S-adenosyl-L-methionine = 2'-O-methyluridine(2552) in 23S rRNA + S-adenosyl-L-homocysteine + H(+). In terms of biological role, specifically methylates the uridine in position 2552 of 23S rRNA at the 2'-O position of the ribose in the fully assembled 50S ribosomal subunit. The polypeptide is Ribosomal RNA large subunit methyltransferase E (Nitratidesulfovibrio vulgaris (strain ATCC 29579 / DSM 644 / CCUG 34227 / NCIMB 8303 / VKM B-1760 / Hildenborough) (Desulfovibrio vulgaris)).